Reading from the N-terminus, the 440-residue chain is L-gulonolactone oxidase (440 aa).

Residues 17–187 form the FAD-binding PCMH-type domain; sequence YSCEPELYFE…LNVTIQCVPA (171 aa). Histidine 54 carries the pros-8alpha-FAD histidine modification. A helical transmembrane segment spans residues 245-267; that stretch reads WFWNYAIGYYLLEFLLWISVFVP.

This sequence belongs to the oxygen-dependent FAD-linked oxidoreductase family. FAD serves as cofactor.

The protein localises to the microsome membrane. It localises to the endoplasmic reticulum membrane. The catalysed reaction is L-gulono-1,4-lactone + O2 = L-ascorbate + H2O2 + H(+). The protein operates within cofactor biosynthesis; L-ascorbate biosynthesis via UDP-alpha-D-glucuronate pathway; L-ascorbate from UDP-alpha-D-glucuronate: step 4/4. In terms of biological role, oxidizes L-gulono-1,4-lactone to hydrogen peroxide and L-xylo-hexulonolactone which spontaneously isomerizes to L-ascorbate. In Scyliorhinus torazame (Cloudy catshark), this protein is L-gulonolactone oxidase (GULO).